We begin with the raw amino-acid sequence, 152 residues long: Xanthine-guanine phosphoribosyltransferase (152 aa).

Residues 37 to 38 (RG), arginine 69, and 88 to 96 (DDLVDTGGT) each bind 5-phospho-alpha-D-ribose 1-diphosphate. Arginine 69 provides a ligand contact to GMP. Residue aspartate 89 coordinates Mg(2+). Positions 92 and 135 each coordinate guanine. 2 residues coordinate xanthine: aspartate 92 and isoleucine 135. GMP contacts are provided by residues 92–96 (DTGGT) and 134–135 (WI).

This sequence belongs to the purine/pyrimidine phosphoribosyltransferase family. XGPT subfamily. In terms of assembly, homotetramer. Requires Mg(2+) as cofactor.

It is found in the cell inner membrane. The catalysed reaction is GMP + diphosphate = guanine + 5-phospho-alpha-D-ribose 1-diphosphate. The enzyme catalyses XMP + diphosphate = xanthine + 5-phospho-alpha-D-ribose 1-diphosphate. It carries out the reaction IMP + diphosphate = hypoxanthine + 5-phospho-alpha-D-ribose 1-diphosphate. It functions in the pathway purine metabolism; GMP biosynthesis via salvage pathway; GMP from guanine: step 1/1. It participates in purine metabolism; XMP biosynthesis via salvage pathway; XMP from xanthine: step 1/1. In terms of biological role, purine salvage pathway enzyme that catalyzes the transfer of the ribosyl-5-phosphate group from 5-phospho-alpha-D-ribose 1-diphosphate (PRPP) to the N9 position of the 6-oxopurines guanine and xanthine to form the corresponding ribonucleotides GMP (guanosine 5'-monophosphate) and XMP (xanthosine 5'-monophosphate), with the release of PPi. To a lesser extent, also acts on hypoxanthine. In Serratia proteamaculans (strain 568), this protein is Xanthine-guanine phosphoribosyltransferase.